The following is a 315-amino-acid chain: DNA-directed RNA polymerase subunit alpha (315 aa).

The segment at 1 to 228 is alpha N-terminal domain (alpha-NTD); that stretch reads MLEIEKPKIE…EHLRLFVGLT (228 aa). Residues 245–315 are alpha C-terminal domain (alpha-CTD); sequence KNKLLEMPIE…LGLDLRHDEE (71 aa).

Belongs to the RNA polymerase alpha chain family. As to quaternary structure, homodimer. The RNAP catalytic core consists of 2 alpha, 1 beta, 1 beta' and 1 omega subunit. When a sigma factor is associated with the core the holoenzyme is formed, which can initiate transcription.

The catalysed reaction is RNA(n) + a ribonucleoside 5'-triphosphate = RNA(n+1) + diphosphate. DNA-dependent RNA polymerase catalyzes the transcription of DNA into RNA using the four ribonucleoside triphosphates as substrates. The chain is DNA-directed RNA polymerase subunit alpha from Desulforudis audaxviator (strain MP104C).